The primary structure comprises 398 residues: MSLQYGAEETPLAGSYGAADSFPKDFGYGVEEEEEEAAAGGGGGAGAGGGCGPGGADSSKPRILLMGLRRSGKSSIQKVVFHKMSPNETLFLESTNKIYKDDISNSSFVNFQIWDFPGQMDFFDPTFDYEMIFRGTGALIYVIDAQDDYMEALTRLHITVSKAYKVNPDMNFEVFIHKVDGLSDDHKIETQRDIHQRANDDLADAGLEKLHLSFYLTSIYDHSIFEAFSKVVQKLIPQLPTLENLLNIFISNSGIEKAFLFDVVSKIYIATDSSPVDMQSYELCCDMIDVVIDVSCIYGLKEDGSGSAYDKESMAIIKLNNTTVLYLKEVTKFLALVCILREESFERKGLIDYNFHCFRKAIHEVFEVGVTSHRSCSHQTSAPSLKALAHNGTPRNAI.

The tract at residues Met1–Ala56 is disordered. Ser2 is modified (N-acetylserine). A phosphoserine mark is found at Ser2 and Ser15. A compositionally biased stretch (gly residues) spans Ala39 to Gly55. GDP contacts are provided by Arg70, Ser71, Gly72, Lys73, Ser74, and Ser75. Lys73 is a binding site for GTP. GTP-binding residues include Thr89 and Thr95. Thr95 carries the phosphothreonine modification. The GDP site is built by His177, Lys178, Asp180, and Ile219. Asp180 contributes to the GTP binding site.

The protein belongs to the GTR/RAG GTP-binding protein family. Forms a heterodimer with RRAGA, in a sequence-independent manner, and RRAGB. Heterodimerization stabilizes proteins of the heterodimer. The GDP-bound form of RRAGC (in complex with the GTP-bound form of RRAGA or RRAGB), interacts with RPTOR, thereby promoting recruitment of mTORC1 to the lysosomes. Component of the lysosomal folliculin complex (LFC), composed of FLCN, FNIP1 (or FNIP2), RagA/RRAGA or RagB/RRAGB GDP-bound, RagC/RRAGC or RagD/RRAGD GTP-bound, and Ragulator. Interacts with NOL8. Interacts with SH3BP4; the interaction with this negative regulator is most probably direct, preferentially occurs with the inactive GDP-bound form of RRAGB, is negatively regulated by amino acids and prevents interaction with RPTOR. The Rag heterodimer interacts with SLC38A9; the probable amino acid sensor. Interacts with SESN1, SESN2 and SESN3. Interacts with PIP4P1. The GDP-bound form interacts with TFEB. The GDP-bound form interacts with TFE3. In terms of tissue distribution, expressed most abundantly in kidney. Moderately expressed in brain, ovary, and testis, and detected at lower levels in heart, liver, and muscle. Not detected in lung, spleen, and small intestine. Widely expressed in tumor cells, with expression being specifically up-regulated in highly metastatic cells.

It is found in the cytoplasm. Its subcellular location is the nucleus. The protein resides in the lysosome membrane. It catalyses the reaction GTP + H2O = GDP + phosphate + H(+). The activation of RagC/RRAGC is mediated by a GTPase activating protein (GAP). In high-amino acid conditions, activated by GTPase activating protein FLCN that stimulates RRAGC GTPase activity to turn it into its active GDP-bound form. In response to amino acid depletion, the GATOR1 complex inactivates RagC/RRAGC by securing the GTP-bound inactive form. Functionally, guanine nucleotide-binding protein that plays a crucial role in the cellular response to amino acid availability through regulation of the mTORC1 signaling cascade. Forms heterodimeric Rag complexes with RagA/RRAGA or RagB/RRAGB and cycles between an inactive GTP-bound and an active GDP-bound form: RagC/RRAGC is in its active form when GDP-bound RagC/RRAGC forms a complex with GTP-bound RagA/RRAGA (or RagB/RRAGB) and in an inactive form when GTP-bound RagC/RRAGC heterodimerizes with GDP-bound RagA/RRAGA (or RagB/RRAGB). In its GDP-bound active form, promotes the recruitment of mTORC1 to the lysosomes and its subsequent activation by the GTPase RHEB. This is a crucial step in the activation of the MTOR signaling cascade by amino acids. Also plays a central role in the non-canonical mTORC1 complex, which acts independently of RHEB and specifically mediates phosphorylation of MiT/TFE factors TFEB and TFE3: GDP-bound RagC/RRAGC mediates recruitment of MiT/TFE factors TFEB and TFE3. The chain is Ras-related GTP-binding protein C from Mus musculus (Mouse).